We begin with the raw amino-acid sequence, 280 residues long: Sulfur carrier protein FdhD (280 aa).

Cys-121 serves as the catalytic Cysteine persulfide intermediate. 258 to 263 (FSRPGR) provides a ligand contact to Mo-bis(molybdopterin guanine dinucleotide).

This sequence belongs to the FdhD family.

Its subcellular location is the cytoplasm. Functionally, required for formate dehydrogenase (FDH) activity. Acts as a sulfur carrier protein that transfers sulfur from IscS to the molybdenum cofactor prior to its insertion into FDH. This is Sulfur carrier protein FdhD from Cronobacter sakazakii (strain ATCC BAA-894) (Enterobacter sakazakii).